The chain runs to 363 residues: UDP-3-O-acylglucosamine N-acyltransferase (363 aa).

Histidine 266 acts as the Proton acceptor in catalysis.

The protein belongs to the transferase hexapeptide repeat family. LpxD subfamily. Homotrimer.

It carries out the reaction a UDP-3-O-[(3R)-3-hydroxyacyl]-alpha-D-glucosamine + a (3R)-hydroxyacyl-[ACP] = a UDP-2-N,3-O-bis[(3R)-3-hydroxyacyl]-alpha-D-glucosamine + holo-[ACP] + H(+). It participates in bacterial outer membrane biogenesis; LPS lipid A biosynthesis. Its function is as follows. Catalyzes the N-acylation of UDP-3-O-acylglucosamine using 3-hydroxyacyl-ACP as the acyl donor. Is involved in the biosynthesis of lipid A, a phosphorylated glycolipid that anchors the lipopolysaccharide to the outer membrane of the cell. The chain is UDP-3-O-acylglucosamine N-acyltransferase from Bordetella bronchiseptica (strain ATCC BAA-588 / NCTC 13252 / RB50) (Alcaligenes bronchisepticus).